Here is a 390-residue protein sequence, read N- to C-terminus: Lipid-A-disaccharide synthase (390 aa).

The protein belongs to the LpxB family.

The catalysed reaction is a lipid X + a UDP-2-N,3-O-bis[(3R)-3-hydroxyacyl]-alpha-D-glucosamine = a lipid A disaccharide + UDP + H(+). It participates in bacterial outer membrane biogenesis; LPS lipid A biosynthesis. Functionally, condensation of UDP-2,3-diacylglucosamine and 2,3-diacylglucosamine-1-phosphate to form lipid A disaccharide, a precursor of lipid A, a phosphorylated glycolipid that anchors the lipopolysaccharide to the outer membrane of the cell. The protein is Lipid-A-disaccharide synthase of Haemophilus influenzae (strain PittGG).